The following is a 423-amino-acid chain: Cytidylate cyclase (423 aa).

A Guanylate cyclase domain is found at 79 to 184 (CSLFVDISGS…LKIRIGIDFG (106 aa)). A ribonucleoside 5'-triphosphate is bound at residue Phe-82. Positions 84, 85, and 128 each coordinate Mn(2+). The tract at residues 290 to 409 (ENEQFYSPRD…ICHDSFGLFI (120 aa)) is AGS-C domain.

It belongs to the adenylyl cyclase class-4/guanylyl cyclase family. Pyrimidine cyclase subfamily. In terms of assembly, homodimer. Mn(2+) is required as a cofactor.

Its subcellular location is the cytoplasm. The enzyme catalyses CTP = 3',5'-cyclic CMP + diphosphate. Functionally, pycsar (pyrimidine cyclase system for antiphage resistance) provides immunity against bacteriophage. The pyrimidine cyclase (PycC) synthesizes cyclic nucleotides in response to infection; these serve as specific second messenger signals. The signal activates the adjacent effector, leading to bacterial cell death and abortive phage infection. A clade E Pycsar system. Its function is as follows. The pyrimidine cyclase gene of a two-gene Pycsar system, weakly generates cyclic CMP (cCMP) from CTP, has little to no activity on ATP, GTP or UTP. Expression of this and adjacent effector SaPycTM (AC P0DV39) probably confers resistance to bacteriophage. The genes are probably only expressed in response to bacteriophage infection. This chain is Cytidylate cyclase, found in Staphylococcus aureus.